The sequence spans 170 residues: E1B protein, small T-antigen (170 aa).

This sequence belongs to the adenoviridae E1B 19 kDa protein family.

The protein is E1B protein, small T-antigen of Canine adenovirus serotype 2 (CAdV-2).